Reading from the N-terminus, the 249-residue chain is Transmembrane protein 106C (249 aa).

The interval 1-26 (MGSRHSTYAHRPFSKRRKADDTEDSL) is disordered. The N-myristoyl glycine moiety is linked to residue glycine 2. A run of 2 helical transmembrane segments spans residues 86–106 (YVLL…FFLF) and 197–217 (SYVY…VVFV).

Belongs to the TMEM106 family. In terms of assembly, interacts with TMEM106B.

It is found in the endoplasmic reticulum membrane. It localises to the membrane. The sequence is that of Transmembrane protein 106C (TMEM106C) from Bos taurus (Bovine).